We begin with the raw amino-acid sequence, 116 residues long: Nitrogenase-stabilizing/protective protein NifW (116 aa).

The protein belongs to the NifW family. Homotrimer; associates with NifD.

Its function is as follows. May protect the nitrogenase Fe-Mo protein from oxidative damage. The chain is Nitrogenase-stabilizing/protective protein NifW from Rhodopseudomonas palustris (strain ATCC BAA-98 / CGA009).